Here is a 482-residue protein sequence, read N- to C-terminus: 7-deoxyloganetic acid glucosyl transferase (482 aa).

The Proton acceptor role is filled by His-22. Residue His-22 participates in an anthocyanidin binding. The Charge relay role is filled by Asp-127. UDP-alpha-D-glucose contacts are provided by Thr-149, Ala-362, Gln-364, His-379, Trp-382, Asn-383, Ser-384, and Glu-387. An an anthocyanidin-binding site is contributed by Ala-402. UDP-alpha-D-glucose contacts are provided by Asp-403 and Gln-404.

It belongs to the UDP-glycosyltransferase family. Expressed in the leaf internal phloem-associated parenchyma (IPAP) inside the mesophyll. Mostly observed in leaves, roots and stems, and, to a lower extent, in flowers.

It localises to the nucleus. Its subcellular location is the cytoplasm. It is found in the cytosol. It carries out the reaction 7-deoxyloganetate + UDP-alpha-D-glucose = 7-deoxyloganate + UDP + H(+). Its pathway is alkaloid biosynthesis. Component of the seco-iridoid and derivatives monoterpenoid indole alkaloids (MIAs, e.g. vincristine, quinine, and strychnine) biosynthesis pathway. Catalyzes the glucosylation of 7-deoxyloganetic acid to form 7-deoxyloganic acid using UDP-glucose as the sugar donor. Inactive with loganetic acid, loganetin, iridodial, iridotrial, 8-OH-geraniol, jasmonic acid, gibberellic acid, indole acetic acid, salicylic acid, abscisic acid, zeatin and luteolin. This chain is 7-deoxyloganetic acid glucosyl transferase, found in Catharanthus roseus (Madagascar periwinkle).